Here is an 869-residue protein sequence, read N- to C-terminus: Rho GTPase-activating protein 27 (869 aa).

Residues 6-69 form the SH3 domain; that stretch reads EGDVYVLVEH…PAQYVRELPA (64 aa). A disordered region spans residues 104–137; sequence GADGSSAEPRGRASSLCGPARQRTSGQRNSLAPG. 3 positions are modified to phosphoserine: Ser-155, Ser-215, and Ser-249. WW domains follow at residues 246 to 280 and 299 to 333; these read PRLSPVWETHTDAGTGRPYYYNPDTGVTTWESPFE and ESLETEWGQYWDEESGRVFFYNPLTGETVWEDETE. Disordered stretches follow at residues 275 to 299, 331 to 389, and 447 to 474; these read WESPFEAPEGATSPTTSRASVGSGE, ETEE…DLGP, and VPVPAPRSGRKSSQDSDTPAQASPPEEK. Acidic residues predominate over residues 331-343; it reads ETEELEDDPEEQL. Residues 345 to 356 are compositionally biased toward polar residues; that stretch reads MQPSLSPRSPGQ. Ser-350 is modified (phosphoserine). A WW 3 domain is found at 414–447; that stretch reads QFTQEQWVRLEDQEGKPYFYNPEDSSVQWELPQV. Phosphoserine is present on residues Ser-459 and Ser-462. Thr-464 is modified (phosphothreonine). The residue at position 469 (Ser-469) is a Phosphoserine. Positions 477-593 constitute a PH domain; it reads TLDKAGVLHR…WHKAIAEGIE (117 aa). The interval 598–644 is disordered; the sequence is DLPQREEGEPSSADFGSSERLGSWKEEDVRPNAASPSLNPGSQESDL. Polar residues predominate over residues 631 to 642; that stretch reads ASPSLNPGSQES. At Ser-632 the chain carries Phosphoserine. In terms of domain architecture, Rho-GAP spans 677–866; it reads CALAQLCERE…LILHQCADIF (190 aa).

In terms of assembly, interacts with SH3KBP1/CIN85.

It localises to the cytoplasm. It is found in the membrane. Rho GTPase-activating protein which may be involved in clathrin-mediated endocytosis. GTPase activators for the Rho-type GTPases act by converting them to an inactive GDP-bound state. Has activity toward CDC42 and RAC1. This is Rho GTPase-activating protein 27 (Arhgap27) from Rattus norvegicus (Rat).